Here is a 357-residue protein sequence, read N- to C-terminus: Alanine racemase (357 aa).

The Proton acceptor; specific for D-alanine role is filled by lysine 34. Position 34 is an N6-(pyridoxal phosphate)lysine (lysine 34). Substrate is bound at residue arginine 129. Residue tyrosine 254 is the Proton acceptor; specific for L-alanine of the active site. Position 302 (methionine 302) interacts with substrate.

This sequence belongs to the alanine racemase family. Pyridoxal 5'-phosphate is required as a cofactor.

The catalysed reaction is L-alanine = D-alanine. The protein operates within amino-acid biosynthesis; D-alanine biosynthesis; D-alanine from L-alanine: step 1/1. Functionally, catalyzes the interconversion of L-alanine and D-alanine. Likely plays an important role in supplying D-alanine, which is an indispensable constituent in the biosynthesis of bacterial cell-wall peptidoglycan. The sequence is that of Alanine racemase from Aeromonas hydrophila subsp. hydrophila (strain ATCC 7966 / DSM 30187 / BCRC 13018 / CCUG 14551 / JCM 1027 / KCTC 2358 / NCIMB 9240 / NCTC 8049).